The chain runs to 153 residues: Natriuretic peptides A (153 aa).

The first 25 residues, 1-25, serve as a signal peptide directing secretion; that stretch reads MGPFSTITVSFLFCLAFWHPDQIGA. 2 propeptides span residues 26 to 123 and 93 to 103; these read NPVY…TAPR and DGEALGRSTWE. The disordered stretch occupies residues 54 to 101; the sequence is EDEAVPPQALSEQSDEAGAALSPLPEVPPWTGEVSPAQRDGEALGRST. Ser129 carries the post-translational modification Phosphoserine. Cys130 and Cys146 are joined by a disulfide. The segment at 147-151 is important for degradation of atrial natriuretic peptide by IDE; sequence NSFRY.

This sequence belongs to the natriuretic peptide family. Homodimer; disulfide-linked antiparallel dimer. The precursor molecule is proteolytically cleaved by CORIN at Arg-123 to produce the atrial natriuretic peptide. Undergoes further proteolytic cleavage by unknown proteases to give rise to long-acting natriuretic peptide, vessel dilator and kaliuretic peptide. Additional processing gives rise to the auriculin and atriopeptin peptides. In the kidneys, alternative processing by an unknown protease results in the peptide urodilatin. In terms of processing, cleavage by MME initiates degradation of the factor and thereby regulates its activity. Degradation by IDE results in reduced activation of NPR1 (in vitro). During IDE degradation, the resulting products can temporarily stimulate NPR2 to produce cGMP, before the fragments are completely degraded and inactivated by IDE (in vitro). Post-translationally, degraded by IDE. Phosphorylation on Ser-129 decreases vasorelaxant activity.

It is found in the secreted. It localises to the perikaryon. The protein resides in the cell projection. In terms of biological role, hormone that plays a key role in mediating cardio-renal homeostasis, and is involved in vascular remodeling and regulating energy metabolism. Acts by specifically binding and stimulating NPR1 to produce cGMP, which in turn activates effector proteins, such as PRKG1, that drive various biological responses. Regulates vasodilation, natriuresis, diuresis and aldosterone synthesis and is therefore essential for regulating blood pressure, controlling the extracellular fluid volume and maintaining the fluid-electrolyte balance. Also involved in inhibiting cardiac remodeling and cardiac hypertrophy by inducing cardiomyocyte apoptosis and attenuating the growth of cardiomyocytes and fibroblasts. Plays a role in female pregnancy by promoting trophoblast invasion and spiral artery remodeling in uterus, and thus prevents pregnancy-induced hypertension. In adipose tissue, acts in various cGMP- and PKG-dependent pathways to regulate lipid metabolism and energy homeostasis. This includes up-regulating lipid metabolism and mitochondrial oxygen utilization by activating the AMP-activated protein kinase (AMPK), and increasing energy expenditure by acting via MAPK11 to promote the UCP1-dependent thermogenesis of brown adipose tissue. Binds the clearance receptor NPR3 which removes the hormone from circulation. Functionally, may have a role in cardio-renal homeostasis through regulation of natriuresis, diuresis, vasodilation, and inhibiting aldosterone synthesis. In vitro, promotes the production of cGMP and induces vasodilation. May promote natriuresis, at least in part, by enhancing prostaglandin E2 synthesis resulting in the inhibition of renal Na+-K+-ATPase. However reports on the involvement of this peptide in mammal blood volume and blood pressure homeostasis are conflicting; according to a report, in vivo it is not sufficient to activate cGMP and does not inhibit collecting duct transport nor effect diuresis and natriuresis. Appears to bind to specific receptors that are distinct from the receptors bound by atrial natriuretic peptide and vessel dilator. Possibly enhances protein excretion in urine by decreasing proximal tubular protein reabsorption. Its function is as follows. May have a role in cardio-renal homeostasis through regulation of natriuresis, diuresis, and vasodilation. In vitro, promotes the production of cGMP and induces vasodilation. May promote natriuresis, at least in part, by enhancing prostaglandin E2 synthesis resulting in the inhibition of renal Na+-K+-ATPase. However reports on the involvement of this peptide in mammal blood volume and blood pressure homeostasis are conflicting; according to a report it is not sufficient to activate cGMP and does not inhibit collecting duct transport nor effect diuresis and natriuresis. Appears to bind to specific receptors that are distinct from the receptors bound by the atrial natriuretic and long-acting natriuretic peptides. Possibly functions in protein excretion in urine by maintaining the integrity of the proximal tubules and enhancing protein excretion by decreasing proximal tubular protein reabsorption. May have a role in cardio-renal homeostasis through regulation of diuresis and inhibiting aldosterone synthesis. In vitro, promotes the production of cGMP and induces vasodilation. May promote natriuresis, at least in part, by enhancing prostaglandin E2 synthesis resulting in the inhibition of renal Na+-K+-ATPase. May have a role in potassium excretion but not sodium excretion (natriuresis). Possibly enhances protein excretion in urine by decreasing proximal tubular protein reabsorption. In terms of biological role, hormone produced in the kidneys that appears to be important for maintaining cardio-renal homeostasis. Mediates vasodilation, natriuresis and diuresis primarily in the renal system, in order to maintain the extracellular fluid volume and control the fluid-electrolyte balance. Specifically binds and stimulates cGMP production by renal transmembrane receptors, likely NPR1. Urodilatin not ANP, may be the natriuretic peptide responsible for the regulation of sodium and water homeostasis in the kidney. Functionally, may have a role in cardio-renal homeostasis through regulation of natriuresis and vasodilation. In vivo promotes natriuresis and in vitro, vasodilates renal artery strips. Its function is as follows. May have a role in cardio-renal homeostasis through regulation of regulation of natriuresis and vasodilation. In vivo promotes natriuresis. In vitro, vasodilates intestinal smooth muscle but not smooth muscle strips. May have a role in cardio-renal homeostasis through regulation of natriuresis and vasodilation. In vivo promotes natriuresis. In vitro, selectively vasodilates intestinal and vascular smooth muscle strips. In terms of biological role, may have a role in cardio-renal homeostasis through regulation of natriuresis and vasodilation. In vivo promotes natriuresis. In vitro, selectively vasodilates intestinal smooth muscle but not vascular smooth muscle strips. The protein is Natriuretic peptides A (NPPA) of Oryctolagus cuniculus (Rabbit).